The sequence spans 310 residues: Solute carrier family 25 member 47 (310 aa).

3 Solcar repeats span residues 1-80, 93-208, and 217-304; these read MDFV…CLAH, PTKA…LCEW, and PDVL…VLRL. Helical transmembrane passes span 3–23, 55–75, 98–114, 194–210, 219–239, and 280–298; these read FVAG…LDTV, GLSL…GTYH, ITLS…FLTS, SFAT…EWLT, VLGV…VATP, and LALN…FVAY.

This sequence belongs to the mitochondrial carrier (TC 2.A.29) family. As to expression, specifically expressed in liver (at protein level).

The protein resides in the mitochondrion inner membrane. It is found in the mitochondrion outer membrane. The catalysed reaction is NAD(+)(in) = NAD(+)(out). It catalyses the reaction acetyl-CoA(in) = acetyl-CoA(out). In terms of biological role, mitochondrial NAD(+) transporter that acts as a 'metabolic gate' in hepatic lipogenesis. Provides NAD(+) substrate to mitochondrial SIRT3 deacetylase and enables its NAD(+)-dependent activities in mitochondrial energy metabolism. This triggers downstream activation of PRKAA1/AMPK-alpha signaling cascade that negatively regulates sterol regulatory element-binding protein (SREBP) transcriptional activities and ATP-consuming lipogenesis to restore cellular energy balance. May transport other mitochondrial metabolites having an aromatic nucleotide and phosphate groups, such as acetyl-CoA. Does not transport amino acids. The transport mechanism remains to be elucidated. The chain is Solute carrier family 25 member 47 from Mus musculus (Mouse).